The following is a 249-amino-acid chain: Zinc finger AN1 and C2H2 domain-containing stress-associated protein 13 (249 aa).

2 consecutive AN1-type zinc fingers follow at residues 7–55 (PDLG…RGDV) and 95–145 (AVKK…KPES). 16 residues coordinate Zn(2+): C13, C18, C28, C31, C36, H39, H45, C47, C101, C106, C118, C121, C126, H129, H135, and C137. Positions 194–213 (FASGNDGNSEKTQERNGKQN) are disordered. Basic and acidic residues predominate over residues 201–210 (NSEKTQERNG). The C2H2-type zinc finger occupies 220–243 (DVCPKCSRGFRDPVDLLKHIDKDH).

Its function is as follows. May be involved in environmental stress response. The chain is Zinc finger AN1 and C2H2 domain-containing stress-associated protein 13 (SAP13) from Arabidopsis thaliana (Mouse-ear cress).